The sequence spans 555 residues: MVYDYIIIGAGSAGNVLATRLTEDPDVTVLLLEAGGPDYRFDFRTQMPAALAYPLQGRRYNWAYETEPEPHMNNRRMECGRGKGLGGSSLINGMCYIRGNAMDFDEWAKLPGLEDWNYLNCLPYFRKAETRDIGANDYHGDSGPVSVTTPKKGNNVLFHAMVEAGVQAGYPRTDDLNGYQQEGFGPMDRTVTPHGRRASTARGYLDQAKSRKNLTIETHATTDIIEFEGKKASGVRYFKGTNTTPQHVKARKEILLCAGAIASPQILQRSGVGPEDVLNEFDISPVHVLPGVGQNLQDHLEMYLQYECKQPVSLYPALKWYNQPKIGAEWLFKGTGIGASNQFEAGGFIRSSEKFAWPNIQFHFLPVAINYNGSNAVEVHGFQAHVGSMRSPSRGRIKITSRDPHQHPSILFNYMSTEQDWQEFRAAIRITREIMAQPALDPYRGEEISPGKDIQTDEQLDAFVRERAETAFHPCGSCKMGNDEMAVVDGAGRVHGIESLRVIDASIMPNIITGNLNATTIMIAEKMADKIKGIKPLPASQADYYVAGHSPARRN.

4–33 (DYIIIGAGSAGNVLATRLTEDPDVTVLLLE) is an FAD binding site. Histidine 473 (proton acceptor) is an active-site residue.

Belongs to the GMC oxidoreductase family. It depends on FAD as a cofactor.

The enzyme catalyses choline + A = betaine aldehyde + AH2. The catalysed reaction is betaine aldehyde + NAD(+) + H2O = glycine betaine + NADH + 2 H(+). It participates in amine and polyamine biosynthesis; betaine biosynthesis via choline pathway; betaine aldehyde from choline (cytochrome c reductase route): step 1/1. In terms of biological role, involved in the biosynthesis of the osmoprotectant glycine betaine. Catalyzes the oxidation of choline to betaine aldehyde and betaine aldehyde to glycine betaine at the same rate. This chain is Oxygen-dependent choline dehydrogenase, found in Proteus mirabilis (strain HI4320).